A 261-amino-acid polypeptide reads, in one-letter code: Carbonic anhydrase 1 (261 aa).

Position 2 is an N-acetylalanine (Ala2). In terms of domain architecture, Alpha-carbonic anhydrase spans 4–261 (PDWGYDDKNG…LKGRTVRASF (258 aa)). His65 serves as the catalytic Proton donor/acceptor. Zn(2+)-binding residues include His95, His97, and His120. Residues Thr200 and 200 to 201 (TH) each bind substrate. The interval 238-261 (NPVPIQRNNRPTQPLKGRTVRASF) is disordered.

This sequence belongs to the alpha-carbonic anhydrase family. Requires Zn(2+) as cofactor.

The protein resides in the cytoplasm. The enzyme catalyses hydrogencarbonate + H(+) = CO2 + H2O. It catalyses the reaction urea = cyanamide + H2O. Inhibited by acetazolamide. In terms of biological role, catalyzes the reversible hydration of carbon dioxide. Can hydrate cyanamide to urea. In Macaca mulatta (Rhesus macaque), this protein is Carbonic anhydrase 1 (CA1).